The following is a 334-amino-acid chain: DNA-directed RNA polymerase subunit alpha (334 aa).

Residues 1 to 231 (MQSNTFLTPR…EQLSVFADLK (231 aa)) are alpha N-terminal domain (alpha-NTD). Residues 245–334 (IDPVLLRPVD…GKKDTSHAAP (90 aa)) are alpha C-terminal domain (alpha-CTD).

The protein belongs to the RNA polymerase alpha chain family. Homodimer. The RNAP catalytic core consists of 2 alpha, 1 beta, 1 beta' and 1 omega subunit. When a sigma factor is associated with the core the holoenzyme is formed, which can initiate transcription.

The enzyme catalyses RNA(n) + a ribonucleoside 5'-triphosphate = RNA(n+1) + diphosphate. In terms of biological role, DNA-dependent RNA polymerase catalyzes the transcription of DNA into RNA using the four ribonucleoside triphosphates as substrates. The polypeptide is DNA-directed RNA polymerase subunit alpha (Nitrosospira multiformis (strain ATCC 25196 / NCIMB 11849 / C 71)).